Reading from the N-terminus, the 457-residue chain is Multidrug resistance protein MdtK (457 aa).

12 consecutive transmembrane segments (helical) span residues 11–31 (LLAL…MGVV), 46–66 (AVAV…GLLL), 93–113 (WLAF…DHII), 127–147 (AVGF…FQVL), 160–180 (GMVI…IFIY), 188–208 (LGGV…FLMM), 243–263 (LPVA…ALLV), 278–300 (LNFS…IRVG), 316–336 (YTSI…TVVF), 350–370 (VVVM…SDAI), 387–407 (IFFI…YLLG), and 418–438 (PSGF…LMAL).

The protein belongs to the multi antimicrobial extrusion (MATE) (TC 2.A.66.1) family. MdtK subfamily.

Its subcellular location is the cell inner membrane. Functionally, multidrug efflux pump that functions probably as a Na(+)/drug antiporter. The protein is Multidrug resistance protein MdtK of Yersinia enterocolitica serotype O:8 / biotype 1B (strain NCTC 13174 / 8081).